Here is a 444-residue protein sequence, read N- to C-terminus: Methylenetetrahydrofolate--tRNA-(uracil-5-)-methyltransferase TrmFO (444 aa).

Residue 11-16 (GGGLAG) coordinates FAD.

This sequence belongs to the MnmG family. TrmFO subfamily. The cofactor is FAD.

The protein localises to the cytoplasm. It catalyses the reaction uridine(54) in tRNA + (6R)-5,10-methylene-5,6,7,8-tetrahydrofolate + NADH + H(+) = 5-methyluridine(54) in tRNA + (6S)-5,6,7,8-tetrahydrofolate + NAD(+). The catalysed reaction is uridine(54) in tRNA + (6R)-5,10-methylene-5,6,7,8-tetrahydrofolate + NADPH + H(+) = 5-methyluridine(54) in tRNA + (6S)-5,6,7,8-tetrahydrofolate + NADP(+). Catalyzes the folate-dependent formation of 5-methyl-uridine at position 54 (M-5-U54) in all tRNAs. This is Methylenetetrahydrofolate--tRNA-(uracil-5-)-methyltransferase TrmFO from Desulfotalea psychrophila (strain LSv54 / DSM 12343).